A 405-amino-acid polypeptide reads, in one-letter code: MGALTIVAKYMIVAQIEVNGSVDKSDIIGALFSQTEGLLGKDMDLRELQMMGRIGRIEVEISEKNSKTKARIYIPSNLDRYETALVAALIESVERVGPYLASVKVLEIKDLREEKRRKIIERAKELVKLIEEEILPDTKEIIERLKEDVAKAEIIEYGPEKLPAGPDVDKSDSIIVVEGRADVVNLVKHGYRNVIAIEGISKGVPQTIIDLSKKKSVTVFIDGDKGGEIVLRELIKVAHIDYIARAPPGKEVEQLTAKEIAKALRNKITLEEWLAQQKAAGEKTESQMSPQQPQLTQTQPTTAEVQAPFDLSKKIEEMLGTLEAEIYDANWTLLKRLPVRELPDFLANSNDSIYAVVMDGIVTQRIVDLATKRGVKVIITARVGPLTKVPEDMKIVTFDQITQKT.

One can recognise a Toprim domain in the interval 172–248 (DSIIVVEGRA…HIDYIARAPP (77 aa)). Mg(2+) contacts are provided by Glu178, Asp222, and Asp224. The disordered stretch occupies residues 279 to 302 (AAGEKTESQMSPQQPQLTQTQPTT). Positions 290 to 302 (PQQPQLTQTQPTT) are enriched in low complexity.

It belongs to the archaeal DnaG primase family. As to quaternary structure, forms a ternary complex with MCM helicase and DNA. Component of the archaeal exosome complex. The cofactor is Mg(2+).

It catalyses the reaction ssDNA + n NTP = ssDNA/pppN(pN)n-1 hybrid + (n-1) diphosphate.. Its function is as follows. RNA polymerase that catalyzes the synthesis of short RNA molecules used as primers for DNA polymerase during DNA replication. Also part of the exosome, which is a complex involved in RNA degradation. Acts as a poly(A)-binding protein that enhances the interaction between heteromeric, adenine-rich transcripts and the exosome. This chain is DNA primase DnaG, found in Pyrobaculum islandicum (strain DSM 4184 / JCM 9189 / GEO3).